The chain runs to 613 residues: Laccase 1 (613 aa).

A signal peptide spans 1–20; sequence MSRFARLLLIVALFFTNAWA. Plastocyanin-like domains are found at residues 29–142 and 171–359; these read ITWK…IRPK and YLVV…MRIP. N-linked (GlcNAc...) asparagine glycosylation is present at asparagine 74. Cu cation-binding residues include histidine 78, histidine 80, histidine 122, and histidine 124. 5 N-linked (GlcNAc...) asparagine glycosylation sites follow: asparagine 256, asparagine 279, asparagine 444, asparagine 468, and asparagine 484. One can recognise a Plastocyanin-like 3 domain in the interval 468-598; the sequence is NATRDTENDG…GGMGIAILDG (131 aa). The Cu cation site is built by histidine 506, histidine 509, and histidine 511. Asparagine 526 carries an N-linked (GlcNAc...) asparagine glycan. Cu cation-binding residues include histidine 580, cysteine 581, histidine 582, and histidine 586.

It belongs to the multicopper oxidase family. The cofactor is Cu cation.

It is found in the cell surface. It participates in pigment biosynthesis. Functionally, laccase; part of the Pks1 gene cluster that mediates the biosynthesis of an anthraquinone derivative pigment that contributes to conidial pigmentation that provides protection from UV radiation, heat and cold stress. The polyketide synthase Pks1 produces 1-acetyl-2,4,6,8-tetrahydroxy-9,10-anthraquinone though condensation of acetyl-CoA with malonyl-CoA. The dehydratase EthD and the laccase Mlac1 further convert the anthraquinone derivative into the final conidial pigment. This chain is Laccase 1, found in Metarhizium robertsii (strain ARSEF 23 / ATCC MYA-3075) (Metarhizium anisopliae (strain ARSEF 23)).